Consider the following 433-residue polypeptide: 4-hydroxy-3-methylbut-2-en-1-yl diphosphate synthase (flavodoxin) (433 aa).

Positions 320, 323, 366, and 373 each coordinate [4Fe-4S] cluster.

This sequence belongs to the IspG family. Requires [4Fe-4S] cluster as cofactor.

The catalysed reaction is (2E)-4-hydroxy-3-methylbut-2-enyl diphosphate + oxidized [flavodoxin] + H2O + 2 H(+) = 2-C-methyl-D-erythritol 2,4-cyclic diphosphate + reduced [flavodoxin]. It participates in isoprenoid biosynthesis; isopentenyl diphosphate biosynthesis via DXP pathway; isopentenyl diphosphate from 1-deoxy-D-xylulose 5-phosphate: step 5/6. Converts 2C-methyl-D-erythritol 2,4-cyclodiphosphate (ME-2,4cPP) into 1-hydroxy-2-methyl-2-(E)-butenyl 4-diphosphate. The sequence is that of 4-hydroxy-3-methylbut-2-en-1-yl diphosphate synthase (flavodoxin) from Beijerinckia indica subsp. indica (strain ATCC 9039 / DSM 1715 / NCIMB 8712).